Reading from the N-terminus, the 624-residue chain is Phosphatidylserine decarboxylase proenzyme 2 (624 aa).

Residues 1–30 are disordered; that stretch reads MGHSPSRHNACGGGGGDGESPPSPLPSRFE. Positions 16 to 129 constitute a C2 domain; that stretch reads GDGESPPSPL…KDLDEHSEVL (114 aa). 2 EF-hand domains span residues 156 to 191 and 192 to 227; these read TEQS…FGNK and LAVA…QQEK. Ca(2+) contacts are provided by aspartate 169, asparagine 171, aspartate 173, glutamate 175, glutamate 180, aspartate 205, asparagine 207, aspartate 209, and glutamate 216. Active-site charge relay system; for autoendoproteolytic cleavage activity residues include aspartate 425, histidine 481, and serine 569. The Schiff-base intermediate with substrate; via pyruvic acid; for decarboxylase activity role is filled by serine 569. Serine 569 is subject to Pyruvic acid (Ser); by autocatalysis.

It belongs to the phosphatidylserine decarboxylase family. PSD-B subfamily. Eukaryotic type II sub-subfamily. As to quaternary structure, heterodimer of a large membrane-associated beta subunit and a small pyruvoyl-containing alpha subunit. Pyruvate is required as a cofactor. Post-translationally, is synthesized initially as an inactive proenzyme. Formation of the active enzyme involves a self-maturation process in which the active site pyruvoyl group is generated from an internal serine residue via an autocatalytic post-translational modification. Two non-identical subunits are generated from the proenzyme in this reaction, and the pyruvate is formed at the N-terminus of the alpha chain, which is derived from the carboxyl end of the proenzyme. The autoendoproteolytic cleavage occurs by a canonical serine protease mechanism, in which the side chain hydroxyl group of the serine supplies its oxygen atom to form the C-terminus of the beta chain, while the remainder of the serine residue undergoes an oxidative deamination to produce ammonia and the pyruvoyl prosthetic group on the alpha chain. During this reaction, the Ser that is part of the protease active site of the proenzyme becomes the pyruvoyl prosthetic group, which constitutes an essential element of the active site of the mature decarboxylase.

The protein localises to the vacuole membrane. It localises to the endoplasmic reticulum membrane. The enzyme catalyses a 1,2-diacyl-sn-glycero-3-phospho-L-serine + H(+) = a 1,2-diacyl-sn-glycero-3-phosphoethanolamine + CO2. The protein operates within phospholipid metabolism; phosphatidylethanolamine biosynthesis; phosphatidylethanolamine from CDP-diacylglycerol: step 2/2. In terms of biological role, catalyzes the formation of phosphatidylethanolamine (PtdEtn) from phosphatidylserine (PtdSer). Plays a central role in phospholipid metabolism and in the interorganelle trafficking of phosphatidylserine. The sequence is that of Phosphatidylserine decarboxylase proenzyme 2 from Oryza sativa subsp. japonica (Rice).